The chain runs to 570 residues: Putative ABC transporter ATP-binding protein SACOL2708 (570 aa).

ABC transporter domains follow at residues 6–247 (ISFK…GIRE) and 304–537 (LELN…ASLR). Residues 40–47 (GASGSGKS) and 338–345 (GHNGAGKS) each bind ATP.

This sequence belongs to the ABC transporter superfamily.

It localises to the cell membrane. Its function is as follows. Probably part of an ABC transporter complex. Responsible for energy coupling to the transport system. The polypeptide is Putative ABC transporter ATP-binding protein SACOL2708 (Staphylococcus aureus (strain COL)).